Here is a 705-residue protein sequence, read N- to C-terminus: Ribosomal RNA large subunit methyltransferase K/L (705 aa).

The THUMP domain maps to 43–154 (VVYRCCLWSR…GEKGILGFDL (112 aa)).

This sequence belongs to the methyltransferase superfamily. RlmKL family.

It localises to the cytoplasm. It catalyses the reaction guanosine(2445) in 23S rRNA + S-adenosyl-L-methionine = N(2)-methylguanosine(2445) in 23S rRNA + S-adenosyl-L-homocysteine + H(+). The catalysed reaction is guanosine(2069) in 23S rRNA + S-adenosyl-L-methionine = N(2)-methylguanosine(2069) in 23S rRNA + S-adenosyl-L-homocysteine + H(+). Its function is as follows. Specifically methylates the guanine in position 2445 (m2G2445) and the guanine in position 2069 (m7G2069) of 23S rRNA. This chain is Ribosomal RNA large subunit methyltransferase K/L, found in Aliivibrio fischeri (strain MJ11) (Vibrio fischeri).